We begin with the raw amino-acid sequence, 366 residues long: MIRTEEMLLNVGPQHPSTHGVFRLVIKIDGEIIKEATPVIGYLHRGTEKIAESLQYTQIIPYTDRMDYLSAMTNNYVICHAVETMIGLEIPERAEYLRVLAMELGRIASHLVWWGTNLLDIGAVSPFLYAFREREMIINLLNELCGARLTFNYMRVGGVKWDAPDGWIEKVEEFVPYMREQLAGYHDLVSGNEIFLNRVKGVGIYSAEEAISYSLSGANLRCTGVNWDLRKDEPYSIYNRFDFDIPVGSVGDAWDRYVCRMQEIEESLKIVEQAVQQFPKEGAVLAKVPKIIKAPKGEAFVRIESPRGEIGCYIASDGKKEPYRLKFRRPSFYNLQILPKLLKGENIANLITILGGVDIVLGEVDG.

Belongs to the complex I 49 kDa subunit family. In terms of assembly, NDH-1 is composed of 14 different subunits. Subunits NuoB, C, D, E, F, and G constitute the peripheral sector of the complex.

The protein localises to the cell membrane. The enzyme catalyses a quinone + NADH + 5 H(+)(in) = a quinol + NAD(+) + 4 H(+)(out). Functionally, NDH-1 shuttles electrons from NADH, via FMN and iron-sulfur (Fe-S) centers, to quinones in the respiratory chain. The immediate electron acceptor for the enzyme in this species is believed to be a menaquinone. Couples the redox reaction to proton translocation (for every two electrons transferred, four hydrogen ions are translocated across the cytoplasmic membrane), and thus conserves the redox energy in a proton gradient. This is NADH-quinone oxidoreductase subunit D from Bacillus thuringiensis (strain Al Hakam).